The chain runs to 996 residues: Alanine--tRNA ligase, chloroplastic/mitochondrial (996 aa).

The Zn(2+) site is built by histidine 677, histidine 681, cysteine 779, and histidine 783.

It belongs to the class-II aminoacyl-tRNA synthetase family. Monomer. Requires Zn(2+) as cofactor.

It localises to the plastid. The protein localises to the chloroplast. Its subcellular location is the mitochondrion. The catalysed reaction is tRNA(Ala) + L-alanine + ATP = L-alanyl-tRNA(Ala) + AMP + diphosphate. Catalyzes the attachment of alanine to tRNA(Ala) in a two-step reaction: alanine is first activated by ATP to form Ala-AMP and then transferred to the acceptor end of tRNA(Ala). Also edits incorrectly charged tRNA(Ala) via its editing domain. The protein is Alanine--tRNA ligase, chloroplastic/mitochondrial of Oryza sativa subsp. indica (Rice).